The sequence spans 443 residues: tRNA-2-methylthio-N(6)-dimethylallyladenosine synthase (443 aa).

One can recognise an MTTase N-terminal domain in the interval 12–126 (KTFRVKSFGC…LPEMVADAAA (115 aa)). The [4Fe-4S] cluster site is built by Cys-21, Cys-57, Cys-89, Cys-162, Cys-166, and Cys-169. Positions 148 to 380 (RKSAPTAFLT…QAALNRDQLA (233 aa)) constitute a Radical SAM core domain. One can recognise a TRAM domain in the interval 383–443 (KASVGKTCEV…GPNSISGRLA (61 aa)).

The protein belongs to the methylthiotransferase family. MiaB subfamily. As to quaternary structure, monomer. [4Fe-4S] cluster is required as a cofactor.

The protein resides in the cytoplasm. It carries out the reaction N(6)-dimethylallyladenosine(37) in tRNA + (sulfur carrier)-SH + AH2 + 2 S-adenosyl-L-methionine = 2-methylsulfanyl-N(6)-dimethylallyladenosine(37) in tRNA + (sulfur carrier)-H + 5'-deoxyadenosine + L-methionine + A + S-adenosyl-L-homocysteine + 2 H(+). Catalyzes the methylthiolation of N6-(dimethylallyl)adenosine (i(6)A), leading to the formation of 2-methylthio-N6-(dimethylallyl)adenosine (ms(2)i(6)A) at position 37 in tRNAs that read codons beginning with uridine. This Novosphingobium aromaticivorans (strain ATCC 700278 / DSM 12444 / CCUG 56034 / CIP 105152 / NBRC 16084 / F199) protein is tRNA-2-methylthio-N(6)-dimethylallyladenosine synthase.